A 359-amino-acid chain; its full sequence is tRNA N6-adenosine threonylcarbamoyltransferase (359 aa).

2 residues coordinate Fe cation: His-115 and His-119. Substrate contacts are provided by residues 137-141, Asp-170, Gly-183, and Asn-283; that span reads LVSGG. Asp-311 provides a ligand contact to Fe cation. Residues 328-359 are disordered; sequence APDSLDIAPRSRWPLDEKSAPVFGTGRRGAKA.

Belongs to the KAE1 / TsaD family. The cofactor is Fe(2+).

It localises to the cytoplasm. The catalysed reaction is L-threonylcarbamoyladenylate + adenosine(37) in tRNA = N(6)-L-threonylcarbamoyladenosine(37) in tRNA + AMP + H(+). Its function is as follows. Required for the formation of a threonylcarbamoyl group on adenosine at position 37 (t(6)A37) in tRNAs that read codons beginning with adenine. Is involved in the transfer of the threonylcarbamoyl moiety of threonylcarbamoyl-AMP (TC-AMP) to the N6 group of A37, together with TsaE and TsaB. TsaD likely plays a direct catalytic role in this reaction. The protein is tRNA N6-adenosine threonylcarbamoyltransferase of Brucella abortus (strain S19).